We begin with the raw amino-acid sequence, 292 residues long: Ribose import binding protein RbsB (292 aa).

Positions 1 to 23 (MKKLTALTSAVLLGLAVSSSASA) are cleaved as a signal peptide.

This sequence belongs to the bacterial solute-binding protein 2 family. The complex is composed of an ATP-binding protein (RbsA), two transmembrane proteins (RbsC) and a solute-binding protein (RbsB).

The protein localises to the periplasm. Its function is as follows. Part of the ABC transporter complex RbsABC involved in ribose import. Binds ribose. In Haemophilus influenzae (strain ATCC 51907 / DSM 11121 / KW20 / Rd), this protein is Ribose import binding protein RbsB (rbsB).